Consider the following 807-residue polypeptide: Oxysterol-binding protein 1 (807 aa).

The residue at position 2 (alanine 2) is an N-acetylalanine. The interval 61–86 (GAGGVAAAGPAPAPPTGGSGGSGAGG) is disordered. Gly residues predominate over residues 77–86 (GGSGGSGAGG). The PH domain occupies 88-181 (GSAREGWLFK…WVTALELAKA (94 aa)). Position 117–122 (117–122 (LSYYRS)) interacts with a 1,2-diacyl-sn-glycero-3-phospho-(1D-myo-inositol 4-phosphate). A phosphoserine mark is found at serine 190, serine 193, serine 198, serine 238, and serine 240. Residues 291–326 (QKSLQYERDQRIRLEETLEQLAKQHNHLERAFRGAT) are a coiled coil. Glutamine 314 is a binding site for 20-hydroxycholesterol. Glutamine 314 serves as a coordination point for 25-hydroxycholesterol. Position 314 (glutamine 314) interacts with 7beta-hydroxycholesterol. Glutamine 314 contributes to the cholesterol binding site. Glutamine 314 contributes to the ergosterol binding site. Residues 329-353 (PANTPGNVGSGKDQCCSGKGDMSDE) are disordered. 3 positions are modified to phosphoserine: serine 338, serine 345, and serine 351. Positions 358–364 (EFFDAPE) match the FFAT motif. Position 377 is a phosphothreonine (threonine 377). A phosphoserine mark is found at serine 379, serine 382, serine 385, serine 386, and serine 389. A 1,2-diacyl-sn-glycero-3-phospho-(1D-myo-inositol 4-phosphate) is bound by residues 493–496 (KPFN) and 522–523 (HH). The interval 710–759 (TAPTDSRLRPDQRLMENGRWDEANAEKQRLEEKQRLSRKKREAEAMKATE) is disordered. Residues 715–759 (SRLRPDQRLMENGRWDEANAEKQRLEEKQRLSRKKREAEAMKATE) are compositionally biased toward basic and acidic residues. Positions 730–760 (DEANAEKQRLEEKQRLSRKKREAEAMKATED) form a coiled coil.

This sequence belongs to the OSBP family. As to quaternary structure, homodimer or homotrimer. Interacts (via FFAT motif) with VAPA. Interacts (via C-terminus) with RELCH (via the third HEAT repeat). Found in a complex composed of RELCH, OSBP1 and RAB11A. As to expression, widely expressed.

It localises to the cytoplasm. Its subcellular location is the cytosol. The protein resides in the perinuclear region. It is found in the golgi apparatus membrane. The protein localises to the endoplasmic reticulum membrane. It localises to the golgi apparatus. Its subcellular location is the trans-Golgi network. In terms of biological role, lipid transporter involved in lipid countertransport between the Golgi complex and membranes of the endoplasmic reticulum: specifically exchanges sterol with phosphatidylinositol 4-phosphate (PI4P), delivering sterol to the Golgi in exchange for PI4P, which is degraded by the SAC1/SACM1L phosphatase in the endoplasmic reticulum. Binds cholesterol and a range of oxysterols including 25-hydroxycholesterol. Cholesterol binding promotes the formation of a complex with PP2A and a tyrosine phosphatase which dephosphorylates ERK1/2, whereas 25-hydroxycholesterol causes its disassembly. Regulates cholesterol efflux by decreasing ABCA1 stability. In Homo sapiens (Human), this protein is Oxysterol-binding protein 1.